The sequence spans 147 residues: Antiholin-like protein LrgA (147 aa).

4 helical membrane passes run 12–32 (PAHF…SKII), 35–55 (FMPI…VLLC), 74–94 (NIGL…GVIS), and 98–118 (FLII…TGYV).

It belongs to the CidA/LrgA family. LrgA subfamily.

It localises to the cell membrane. Inhibits the expression or activity of extracellular murein hydrolases by interacting, possibly with LrgB, with the holin-like proteins CidA and/or CidB. The LrgAB and CidAB proteins may affect the proton motive force of the membrane. May be involved in programmed cell death (PCD), possibly triggering PCD in response to antibiotics and environmental stresses. The chain is Antiholin-like protein LrgA from Staphylococcus aureus (strain MSSA476).